Reading from the N-terminus, the 291-residue chain is MTTLAIDIGGTKLAAALIDKNLRISQRRELPTPASKTPDALREALKALVEPLRAEARQVAIASTGIIQEGMLLALNPHNLGGLLHFPLVQTLETIAGLPTLAVNDAQAAAWAEYHALPDDIRDMVFITVSTGVGGGVVCDGKLLTGKGGLAGHLGHTLADPHGPVCGCGRVGCVEAIASGRGMAAAARDDLAGCDAKTLFIRAGEGHQQARHLVSQSAQVIARMIADVKATTDCQCVVIGGSVGLAEGYLEQVRAFLMQEPVPYHVALSAARYRHDAGLLGAALLAQGDTL.

ATP contacts are provided by residues Ala5–Lys12 and Gly132–Cys139. Residues His156, Cys166, Cys168, and Cys173 each contribute to the Zn(2+) site.

Belongs to the ROK (NagC/XylR) family. NanK subfamily. Homodimer.

The enzyme catalyses an N-acyl-D-mannosamine + ATP = an N-acyl-D-mannosamine 6-phosphate + ADP + H(+). Its pathway is amino-sugar metabolism; N-acetylneuraminate degradation; D-fructose 6-phosphate from N-acetylneuraminate: step 2/5. Catalyzes the phosphorylation of N-acetylmannosamine (ManNAc) to ManNAc-6-P. The protein is N-acetylmannosamine kinase of Salmonella heidelberg (strain SL476).